The primary structure comprises 278 residues: Phosphonates import ATP-binding protein PhnC 1 (278 aa).

The region spanning 5 to 253 (IRVDSLNKTF…FLNELYGAEG (249 aa)) is the ABC transporter domain. 37–44 (GASGSGKS) is a binding site for ATP.

The protein belongs to the ABC transporter superfamily. Phosphonates importer (TC 3.A.1.9.1) family. The complex is composed of two ATP-binding proteins (PhnC), two transmembrane proteins (PhnE) and a solute-binding protein (PhnD).

It localises to the cell inner membrane. It carries out the reaction phosphonate(out) + ATP + H2O = phosphonate(in) + ADP + phosphate + H(+). Functionally, part of the ABC transporter complex PhnCDE involved in phosphonates import. Responsible for energy coupling to the transport system. This chain is Phosphonates import ATP-binding protein PhnC 1, found in Pseudomonas aeruginosa (strain UCBPP-PA14).